Consider the following 65-residue polypeptide: UPF0434 protein Rpal_0270 (65 aa).

This sequence belongs to the UPF0434 family.

This is UPF0434 protein Rpal_0270 from Rhodopseudomonas palustris (strain TIE-1).